A 318-amino-acid chain; its full sequence is Protein FdhE homolog (318 aa).

It belongs to the FdhE family.

Its subcellular location is the cytoplasm. In terms of biological role, necessary for formate dehydrogenase activity. The sequence is that of Protein FdhE homolog from Pseudomonas putida (strain ATCC 47054 / DSM 6125 / CFBP 8728 / NCIMB 11950 / KT2440).